Here is a 316-residue protein sequence, read N- to C-terminus: Protoheme IX farnesyltransferase (316 aa).

9 helical membrane-spanning segments follow: residues 28 to 48 (WLAL…AAGM), 57 to 77 (IPIG…AGAI), 106 to 126 (AALV…WLAT), 129 to 149 (LAAD…TMWL), 156 to 176 (NIVI…AATM), 179 to 199 (MAVL…PHFW), 230 to 250 (ILIY…VHEV), 254 to 274 (YTVV…RVLM), and 296 to 316 (YSLV…VLIG).

This sequence belongs to the UbiA prenyltransferase family. Protoheme IX farnesyltransferase subfamily.

The protein resides in the cell inner membrane. The catalysed reaction is heme b + (2E,6E)-farnesyl diphosphate + H2O = Fe(II)-heme o + diphosphate. The protein operates within porphyrin-containing compound metabolism; heme O biosynthesis; heme O from protoheme: step 1/1. Functionally, converts heme B (protoheme IX) to heme O by substitution of the vinyl group on carbon 2 of heme B porphyrin ring with a hydroxyethyl farnesyl side group. The polypeptide is Protoheme IX farnesyltransferase (Gluconobacter oxydans (strain 621H) (Gluconobacter suboxydans)).